The sequence spans 165 residues: Cytochrome c-550-like protein (165 aa).

The N-terminal stretch at 1–30 is a signal peptide; the sequence is MLNKSLLIRFVLTILIIVQVIIFDTQPVQA. Heme c-binding residues include C75, C78, H79, and C129.

This sequence belongs to the cytochrome c family. PsbV subfamily. It depends on heme c as a cofactor.

The protein localises to the cellular thylakoid membrane. Possible low-potential cytochrome c. This Trichodesmium erythraeum (strain IMS101) protein is Cytochrome c-550-like protein (psbV2).